The primary structure comprises 275 residues: NADPH-dependent 7-cyano-7-deazaguanine reductase (275 aa).

Position 81–83 (81–83 (IES)) interacts with substrate. 83–84 (SK) is a binding site for NADPH. The Thioimide intermediate role is filled by Cys181. The active-site Proton donor is Asp188. 220–221 (HE) contacts substrate. 249-250 (RG) is an NADPH binding site.

Belongs to the GTP cyclohydrolase I family. QueF type 2 subfamily. In terms of assembly, homodimer.

Its subcellular location is the cytoplasm. It carries out the reaction 7-aminomethyl-7-carbaguanine + 2 NADP(+) = 7-cyano-7-deazaguanine + 2 NADPH + 3 H(+). It functions in the pathway tRNA modification; tRNA-queuosine biosynthesis. Functionally, catalyzes the NADPH-dependent reduction of 7-cyano-7-deazaguanine (preQ0) to 7-aminomethyl-7-deazaguanine (preQ1). In Xylella fastidiosa (strain M12), this protein is NADPH-dependent 7-cyano-7-deazaguanine reductase.